A 301-amino-acid polypeptide reads, in one-letter code: uncharacterized protein (301 aa).

Residues 1–58 enclose the HTH lysR-type domain; sequence MDIRHLTYFLEVARLKSFTKASQSLYVSQPTISKMIKNLEEELGIELFYRNGRQVELT. Residues 18–37 constitute a DNA-binding region (H-T-H motif); the sequence is FTKASQSLYVSQPTISKMIK.

Belongs to the LysR transcriptional regulatory family.

This is an uncharacterized protein from Bacillus subtilis (strain 168).